We begin with the raw amino-acid sequence, 426 residues long: D-tagatose-1,6-bisphosphate aldolase subunit KbaZ (426 aa).

Belongs to the GatZ/KbaZ family. KbaZ subfamily. As to quaternary structure, forms a complex with KbaY.

The protein operates within carbohydrate metabolism; D-tagatose 6-phosphate degradation; D-glyceraldehyde 3-phosphate and glycerone phosphate from D-tagatose 6-phosphate: step 2/2. In terms of biological role, component of the tagatose-1,6-bisphosphate aldolase KbaYZ that is required for full activity and stability of the Y subunit. Could have a chaperone-like function for the proper and stable folding of KbaY. When expressed alone, KbaZ does not show any aldolase activity. The polypeptide is D-tagatose-1,6-bisphosphate aldolase subunit KbaZ (Escherichia coli O157:H7).